We begin with the raw amino-acid sequence, 275 residues long: 4-diphosphocytidyl-2-C-methyl-D-erythritol kinase (275 aa).

K14 is a catalytic residue. 98-108 (PMGAGLGGGSS) contacts ATP. The active site involves D140.

This sequence belongs to the GHMP kinase family. IspE subfamily.

The enzyme catalyses 4-CDP-2-C-methyl-D-erythritol + ATP = 4-CDP-2-C-methyl-D-erythritol 2-phosphate + ADP + H(+). It participates in isoprenoid biosynthesis; isopentenyl diphosphate biosynthesis via DXP pathway; isopentenyl diphosphate from 1-deoxy-D-xylulose 5-phosphate: step 3/6. Its function is as follows. Catalyzes the phosphorylation of the position 2 hydroxy group of 4-diphosphocytidyl-2C-methyl-D-erythritol. The chain is 4-diphosphocytidyl-2-C-methyl-D-erythritol kinase from Francisella tularensis subsp. novicida (strain U112).